Here is a 209-residue protein sequence, read N- to C-terminus: Large ribosomal subunit protein uL3 (209 aa).

Residues 130-154 (RGPMSHGSKFHRAVGSMGASSDPSR) are disordered.

The protein belongs to the universal ribosomal protein uL3 family. Part of the 50S ribosomal subunit. Forms a cluster with proteins L14 and L19.

Functionally, one of the primary rRNA binding proteins, it binds directly near the 3'-end of the 23S rRNA, where it nucleates assembly of the 50S subunit. The chain is Large ribosomal subunit protein uL3 from Clostridium kluyveri (strain NBRC 12016).